The sequence spans 465 residues: Uronate isomerase (465 aa).

This sequence belongs to the metallo-dependent hydrolases superfamily. Uronate isomerase family.

The enzyme catalyses D-glucuronate = D-fructuronate. It catalyses the reaction aldehydo-D-galacturonate = keto-D-tagaturonate. It participates in carbohydrate metabolism; pentose and glucuronate interconversion. In Streptococcus equi subsp. zooepidemicus (strain MGCS10565), this protein is Uronate isomerase.